The sequence spans 497 residues: NADH-quinone oxidoreductase subunit N (497 aa).

14 helical membrane passes run 14-34 (LMAM…MLSI), 45-65 (SLTV…WGLF), 86-106 (IFYS…AYPW), 116-136 (EFYL…SAQH), 137-157 (LAAV…LLGY), 171-191 (YFVL…MLYA), 215-235 (ILAG…LVPF), 253-273 (FLGT…FLYV), 281-301 (LNTA…LMAL), 309-329 (LLGY…IALH), 338-358 (VAVY…VVSL), 385-405 (AAVM…LGFI), 420-439 (WVLT…YYLR), and 461-481 (AFTA…VFGI).

This sequence belongs to the complex I subunit 2 family. In terms of assembly, NDH-1 is composed of 13 different subunits. Subunits NuoA, H, J, K, L, M, N constitute the membrane sector of the complex.

The protein resides in the cell membrane. The enzyme catalyses a quinone + NADH + 5 H(+)(in) = a quinol + NAD(+) + 4 H(+)(out). Its function is as follows. NDH-1 shuttles electrons from NADH, via FMN and iron-sulfur (Fe-S) centers, to quinones in the respiratory chain. The immediate electron acceptor for the enzyme in this species is believed to be ubiquinone. Couples the redox reaction to proton translocation (for every two electrons transferred, four hydrogen ions are translocated across the cytoplasmic membrane), and thus conserves the redox energy in a proton gradient. This is NADH-quinone oxidoreductase subunit N from Hamiltonella defensa subsp. Acyrthosiphon pisum (strain 5AT).